A 477-amino-acid chain; its full sequence is Bifunctional protein HldE (477 aa).

The tract at residues 1–318 (MKVNLPAFER…ENAVRGRADT (318 aa)) is ribokinase. An ATP-binding site is contributed by 195–198 (NLSE). Asp264 is a catalytic residue. Residues 344 to 477 (MTNGVFDILH…IKKIQTESEK (134 aa)) form a cytidylyltransferase region.

This sequence in the N-terminal section; belongs to the carbohydrate kinase PfkB family. The protein in the C-terminal section; belongs to the cytidylyltransferase family. In terms of assembly, homodimer.

It catalyses the reaction D-glycero-beta-D-manno-heptose 7-phosphate + ATP = D-glycero-beta-D-manno-heptose 1,7-bisphosphate + ADP + H(+). The enzyme catalyses D-glycero-beta-D-manno-heptose 1-phosphate + ATP + H(+) = ADP-D-glycero-beta-D-manno-heptose + diphosphate. It participates in nucleotide-sugar biosynthesis; ADP-L-glycero-beta-D-manno-heptose biosynthesis; ADP-L-glycero-beta-D-manno-heptose from D-glycero-beta-D-manno-heptose 7-phosphate: step 1/4. It functions in the pathway nucleotide-sugar biosynthesis; ADP-L-glycero-beta-D-manno-heptose biosynthesis; ADP-L-glycero-beta-D-manno-heptose from D-glycero-beta-D-manno-heptose 7-phosphate: step 3/4. Catalyzes the phosphorylation of D-glycero-D-manno-heptose 7-phosphate at the C-1 position to selectively form D-glycero-beta-D-manno-heptose-1,7-bisphosphate. In terms of biological role, catalyzes the ADP transfer from ATP to D-glycero-beta-D-manno-heptose 1-phosphate, yielding ADP-D-glycero-beta-D-manno-heptose. This is Bifunctional protein HldE from Salmonella enteritidis PT4 (strain P125109).